A 300-amino-acid chain; its full sequence is Actin-related protein 2/3 complex subunit 2 (300 aa).

An N6-acetyllysine mark is found at Lys-275 and Lys-295.

It belongs to the ARPC2 family. Component of the Arp2/3 complex composed of ACTR2/ARP2, ACTR3/ARP3, ARPC1B/p41-ARC, ARPC2/p34-ARC, ARPC3/p21-ARC, ARPC4/p20-ARC and ARPC5/p16-ARC. Interacts with SHANK3; the interaction probably mediates the association of SHANK3 with the Arp2/3 complex.

The protein localises to the cytoplasm. It localises to the cytoskeleton. The protein resides in the cell projection. It is found in the synapse. Its subcellular location is the synaptosome. The protein localises to the nucleus. Functionally, actin-binding component of the Arp2/3 complex, a multiprotein complex that mediates actin polymerization upon stimulation by nucleation-promoting factor (NPF). The Arp2/3 complex mediates the formation of branched actin networks in the cytoplasm, providing the force for cell motility. Seems to contact the mother actin filament. In addition to its role in the cytoplasmic cytoskeleton, the Arp2/3 complex also promotes actin polymerization in the nucleus, thereby regulating gene transcription and repair of damaged DNA. The Arp2/3 complex promotes homologous recombination (HR) repair in response to DNA damage by promoting nuclear actin polymerization, leading to drive motility of double-strand breaks (DSBs). The chain is Actin-related protein 2/3 complex subunit 2 from Rattus norvegicus (Rat).